Reading from the N-terminus, the 171-residue chain is Shikimate kinase (171 aa).

13–18 (GVGKST) contacts ATP. S17 lines the Mg(2+) pocket. 3 residues coordinate substrate: D35, R59, and G81. R118 provides a ligand contact to ATP. Position 136 (R136) interacts with substrate. R153 is an ATP binding site.

It belongs to the shikimate kinase family. As to quaternary structure, monomer. Mg(2+) is required as a cofactor.

It is found in the cytoplasm. The enzyme catalyses shikimate + ATP = 3-phosphoshikimate + ADP + H(+). Its pathway is metabolic intermediate biosynthesis; chorismate biosynthesis; chorismate from D-erythrose 4-phosphate and phosphoenolpyruvate: step 5/7. Catalyzes the specific phosphorylation of the 3-hydroxyl group of shikimic acid using ATP as a cosubstrate. This Streptomyces coelicolor (strain ATCC BAA-471 / A3(2) / M145) protein is Shikimate kinase.